We begin with the raw amino-acid sequence, 215 residues long: MKLVLMGLPGAGKGTQAEQIVEKYNIPHISTGDMFRAAMKNNTELGKKAKSFMDNGDLVPDEVTNGIVRERLAEDDAKNGFLLDGFPRTVEQAEELENILNDLGTELDAVINIEVDKDVLMKRLTGRWICRTCGKTYHEIYNPPKVPGKCDLDGGELYQRDDDKKETVEKRLNVNMKQTKPLLDFYSEKGKLHNINGEQDIKDVFVDVEKILASF.

ATP is bound at residue 10–15; sequence GAGKGT. Residues 30-59 form an NMP region; that stretch reads STGDMFRAAMKNNTELGKKAKSFMDNGDLV. Residues Thr31, Arg36, 57–59, 85–88, and Gln92 each bind AMP; these read DLV and GFPR. An LID region spans residues 126–163; that stretch reads GRWICRTCGKTYHEIYNPPKVPGKCDLDGGELYQRDDD. Position 127 (Arg127) interacts with ATP. Positions 130 and 133 each coordinate Zn(2+). An ATP-binding site is contributed by 136 to 137; that stretch reads TY. Zn(2+)-binding residues include Cys150 and Asp153. AMP is bound by residues Arg160 and Arg171. Gln199 contacts ATP.

This sequence belongs to the adenylate kinase family. Monomer.

It is found in the cytoplasm. The catalysed reaction is AMP + ATP = 2 ADP. The protein operates within purine metabolism; AMP biosynthesis via salvage pathway; AMP from ADP: step 1/1. Functionally, catalyzes the reversible transfer of the terminal phosphate group between ATP and AMP. Plays an important role in cellular energy homeostasis and in adenine nucleotide metabolism. The chain is Adenylate kinase from Listeria monocytogenes serotype 4b (strain CLIP80459).